A 1519-amino-acid polypeptide reads, in one-letter code: Dicer-like protein 1 (1519 aa).

Residues 1–13 show a composition bias toward polar residues; that stretch reads MTHQNTETASLAT. A disordered region spans residues 1 to 62; it reads MTHQNTETAS…KDPSQRQRQQ (62 aa). Residues 39-48 show a composition bias toward acidic residues; sequence SDESEGSEEE. In terms of domain architecture, Helicase ATP-binding spans 116-297; sequence LFERAKVQNT…EAARNLEALL (182 aa). 129–136 contributes to the ATP binding site; the sequence is LDTGSGKT. Positions 242 to 245 match the DEAH box motif; it reads DEAH. One can recognise a Helicase C-terminal domain in the interval 431 to 601; sequence ALSSKVRVLW…QLLPEDRILH (171 aa). A Dicer dsRNA-binding fold domain is found at 634 to 724; the sequence is AITVLARYAS…NSVYHRRLPA (91 aa). The PAZ domain maps to 882 to 1001; the sequence is DDIEYQADMP…ICIEPLKISA (120 aa). RNase III domains follow at residues 1026–1184 and 1235–1387; these read GLEA…LTPG and CRRV…VDSN. 3 residues coordinate Mg(2+): Glu1275, Asp1373, and Glu1376. Residues 1421–1489 enclose the DRBM domain; the sequence is TFLHNKLTNE…SENALTELLH (69 aa). Positions 1433, 1460, 1501, and 1503 each coordinate Zn(2+).

The protein belongs to the helicase family. Dicer subfamily. Mg(2+) serves as cofactor. The cofactor is Mn(2+).

In terms of biological role, dicer-like endonuclease involved in cleaving double-stranded RNA in the RNA interference (RNAi) pathway. Produces 21 to 25 bp dsRNAs (siRNAs) which target the selective destruction of homologous RNAs leading to sequence-specific suppression of gene expression, called post-transcriptional gene silencing (PTGS). Part of a broad host defense response against viral infection and transposons. This chain is Dicer-like protein 1 (dcl1), found in Aspergillus terreus (strain NIH 2624 / FGSC A1156).